A 262-amino-acid polypeptide reads, in one-letter code: 4-hydroxy-2-oxo-heptane-1,7-dioate aldolase (262 aa).

Histidine 45 functions as the Proton acceptor in the catalytic mechanism. Glutamine 147 is a substrate binding site. Glutamate 149 provides a ligand contact to a divalent metal cation. Substrate contacts are provided by alanine 174 and aspartate 175. Aspartate 175 is an a divalent metal cation binding site.

This sequence belongs to the HpcH/HpaI aldolase family. Homohexamer; trimer of dimers. A divalent metal cation is required as a cofactor.

It catalyses the reaction 4-hydroxy-2-oxoheptanedioate = succinate semialdehyde + pyruvate. It participates in aromatic compound metabolism; 4-hydroxyphenylacetate degradation; pyruvate and succinate semialdehyde from 4-hydroxyphenylacetate: step 7/7. Its function is as follows. Catalyzes the reversible retro-aldol cleavage of 4-hydroxy-2-ketoheptane-1,7-dioate (HKHD) to pyruvate and succinic semialdehyde. The sequence is that of 4-hydroxy-2-oxo-heptane-1,7-dioate aldolase from Shigella boydii serotype 4 (strain Sb227).